Here is a 601-residue protein sequence, read N- to C-terminus: Elongation factor 4 (601 aa).

The region spanning 5–188 (SHIRNFAIIA…ALVLRLPPPT (184 aa)) is the tr-type G domain. Residues 17–22 (DHGKST) and 135–138 (NKID) contribute to the GTP site.

The protein belongs to the TRAFAC class translation factor GTPase superfamily. Classic translation factor GTPase family. LepA subfamily.

The protein localises to the cell inner membrane. The enzyme catalyses GTP + H2O = GDP + phosphate + H(+). Functionally, required for accurate and efficient protein synthesis under certain stress conditions. May act as a fidelity factor of the translation reaction, by catalyzing a one-codon backward translocation of tRNAs on improperly translocated ribosomes. Back-translocation proceeds from a post-translocation (POST) complex to a pre-translocation (PRE) complex, thus giving elongation factor G a second chance to translocate the tRNAs correctly. Binds to ribosomes in a GTP-dependent manner. The protein is Elongation factor 4 of Rhodospirillum rubrum (strain ATCC 11170 / ATH 1.1.1 / DSM 467 / LMG 4362 / NCIMB 8255 / S1).